We begin with the raw amino-acid sequence, 345 residues long: Biotin synthase (345 aa).

Residues 60–287 (NQVQLSTLLS…RTMVRLSAGR (228 aa)) enclose the Radical SAM core domain. Residues C75, C79, and C82 each coordinate [4Fe-4S] cluster. C119, C150, C210, and R282 together coordinate [2Fe-2S] cluster.

It belongs to the radical SAM superfamily. Biotin synthase family. Homodimer. [4Fe-4S] cluster serves as cofactor. Requires [2Fe-2S] cluster as cofactor.

It carries out the reaction (4R,5S)-dethiobiotin + (sulfur carrier)-SH + 2 reduced [2Fe-2S]-[ferredoxin] + 2 S-adenosyl-L-methionine = (sulfur carrier)-H + biotin + 2 5'-deoxyadenosine + 2 L-methionine + 2 oxidized [2Fe-2S]-[ferredoxin]. Its pathway is cofactor biosynthesis; biotin biosynthesis; biotin from 7,8-diaminononanoate: step 2/2. Its function is as follows. Catalyzes the conversion of dethiobiotin (DTB) to biotin by the insertion of a sulfur atom into dethiobiotin via a radical-based mechanism. In Polaromonas naphthalenivorans (strain CJ2), this protein is Biotin synthase.